The chain runs to 445 residues: UPF0210 protein SP_0239 (445 aa).

Belongs to the UPF0210 family. In terms of assembly, homodimer.

The sequence is that of UPF0210 protein SP_0239 from Streptococcus pneumoniae serotype 4 (strain ATCC BAA-334 / TIGR4).